Reading from the N-terminus, the 269-residue chain is Aminoglycoside N(3)-acetyltransferase III (269 aa).

The protein belongs to the antibiotic N-acetyltransferase family.

It carries out the reaction a 2-deoxystreptamine antibiotic + acetyl-CoA = an N(3)-acetyl-2-deoxystreptamine antibiotic + CoA + H(+). Its function is as follows. Resistance to antibiotics containing the 2-deoxy-streptamine ring including gentamicin, kanamycin, tobramycin, neomycin and apramycin. This chain is Aminoglycoside N(3)-acetyltransferase III (aac3-Vb), found in Serratia marcescens.